The sequence spans 648 residues: Probable alpha-galactosidase D (648 aa).

The N-terminal stretch at 1–17 is a signal peptide; the sequence is MESIVWLLLLSPALVAG. Asn-84 and Asn-90 each carry an N-linked (GlcNAc...) asparagine glycan. Cys-123 and Cys-156 are disulfide-bonded. Asp-154 (nucleophile) is an active-site residue. 199 to 203 contributes to the substrate binding site; sequence EWGID. The active-site Proton donor is Asp-221. Asn-339, Asn-505, and Asn-572 each carry an N-linked (GlcNAc...) asparagine glycan.

It belongs to the glycosyl hydrolase 27 family.

It localises to the secreted. The enzyme catalyses Hydrolysis of terminal, non-reducing alpha-D-galactose residues in alpha-D-galactosides, including galactose oligosaccharides, galactomannans and galactolipids.. Functionally, hydrolyzes a variety of simple alpha-D-galactoside as well as more complex molecules such as oligosaccharides and polysaccharides. This is Probable alpha-galactosidase D (aglD) from Neosartorya fischeri (strain ATCC 1020 / DSM 3700 / CBS 544.65 / FGSC A1164 / JCM 1740 / NRRL 181 / WB 181) (Aspergillus fischerianus).